The sequence spans 31 residues: Cytochrome b6-f complex subunit 6 (31 aa).

Residues 3-23 (VAIDYFLLVGFCFAVTSGLWI) form a helical membrane-spanning segment.

Belongs to the PetL family. The 4 large subunits of the cytochrome b6-f complex are cytochrome b6, subunit IV (17 kDa polypeptide, PetD), cytochrome f and the Rieske protein, while the 4 small subunits are PetG, PetL, PetM and PetN. The complex functions as a dimer.

It localises to the plastid. The protein resides in the chloroplast thylakoid membrane. Functionally, component of the cytochrome b6-f complex, which mediates electron transfer between photosystem II (PSII) and photosystem I (PSI), cyclic electron flow around PSI, and state transitions. PetL is important for photoautotrophic growth as well as for electron transfer efficiency and stability of the cytochrome b6-f complex. This is Cytochrome b6-f complex subunit 6 from Phaeodactylum tricornutum (strain CCAP 1055/1).